Here is a 354-residue protein sequence, read N- to C-terminus: Protein ECM8 (354 aa).

Functionally, may be involved in cell wall organization and biogenesis. The chain is Protein ECM8 (ECM8) from Saccharomyces cerevisiae (strain ATCC 204508 / S288c) (Baker's yeast).